The primary structure comprises 83 residues: Insect toxin 2-13 (83 aa).

A signal peptide spans 1–21 (MKLLLLLIITASMLIEGLVNA). The region spanning 22-80 (DVYIRRHDGCKISCTVNDKYCDNECKSEGGSYGYCYAFGCWCEGLPNDKAWKSETNTCG) is the LCN-type CS-alpha/beta domain. 4 cysteine pairs are disulfide-bonded: cysteine 31–cysteine 79, cysteine 35–cysteine 56, cysteine 42–cysteine 61, and cysteine 46–cysteine 63. Glycine 80 carries the glycine amide modification.

Belongs to the long (4 C-C) scorpion toxin superfamily. Sodium channel inhibitor family. Beta subfamily. As to expression, expressed by the venom gland.

The protein localises to the secreted. Its function is as follows. Depressant insect toxins cause a transient contraction paralysis followed by a slow flaccid paralysis. They bind voltage-independently to sodium channels (Nav) and block action potentials, primarily by depolarizing the axonal membrane and suppressing the sodium current. This Leiurus hebraeus (Hebrew deathstalker scorpion) protein is Insect toxin 2-13.